Reading from the N-terminus, the 262-residue chain is Phosphatidylserine decarboxylase proenzyme (262 aa).

Catalysis depends on charge relay system; for autoendoproteolytic cleavage activity residues aspartate 86, histidine 142, and serine 226. Serine 226 (schiff-base intermediate with substrate; via pyruvic acid; for decarboxylase activity) is an active-site residue. Serine 226 bears the Pyruvic acid (Ser); by autocatalysis mark.

It belongs to the phosphatidylserine decarboxylase family. PSD-B subfamily. Prokaryotic type I sub-subfamily. As to quaternary structure, heterodimer of a large membrane-associated beta subunit and a small pyruvoyl-containing alpha subunit. Pyruvate serves as cofactor. In terms of processing, is synthesized initially as an inactive proenzyme. Formation of the active enzyme involves a self-maturation process in which the active site pyruvoyl group is generated from an internal serine residue via an autocatalytic post-translational modification. Two non-identical subunits are generated from the proenzyme in this reaction, and the pyruvate is formed at the N-terminus of the alpha chain, which is derived from the carboxyl end of the proenzyme. The autoendoproteolytic cleavage occurs by a canonical serine protease mechanism, in which the side chain hydroxyl group of the serine supplies its oxygen atom to form the C-terminus of the beta chain, while the remainder of the serine residue undergoes an oxidative deamination to produce ammonia and the pyruvoyl prosthetic group on the alpha chain. During this reaction, the Ser that is part of the protease active site of the proenzyme becomes the pyruvoyl prosthetic group, which constitutes an essential element of the active site of the mature decarboxylase.

Its subcellular location is the cell membrane. The catalysed reaction is a 1,2-diacyl-sn-glycero-3-phospho-L-serine + H(+) = a 1,2-diacyl-sn-glycero-3-phosphoethanolamine + CO2. The protein operates within phospholipid metabolism; phosphatidylethanolamine biosynthesis; phosphatidylethanolamine from CDP-diacylglycerol: step 2/2. Its function is as follows. Catalyzes the formation of phosphatidylethanolamine (PtdEtn) from phosphatidylserine (PtdSer). The polypeptide is Phosphatidylserine decarboxylase proenzyme (Bacillus thuringiensis (strain Al Hakam)).